Reading from the N-terminus, the 108-residue chain is DNA-directed RNA polymerase III subunit RPC10 (108 aa).

Positions 5, 8, 25, 28, 69, and 72 each coordinate Zn(2+). Residues 5–28 form a C4-type zinc finger; it reads CPGCGNGLIVEEGQRCHRFACNTC. A TFIIS-type zinc finger spans residues 65-107; it reads TAESCPKCEHPRAYFMQLQTRSADEPMTTFYKCCNAQCGHRWR. A Hairpin motif is present at residues 88 to 89; that stretch reads DE. 2 residues coordinate Zn(2+): C98 and C102.

It belongs to the archaeal RpoM/eukaryotic RPA12/RPB9/RPC11 RNA polymerase family. In terms of assembly, component of the RNA polymerase III complex consisting of 17 subunits: a ten-subunit horseshoe-shaped catalytic core composed of POLR3A/RPC1, POLR3B/RPC2, POLR1C/RPAC1, POLR1D/RPAC2, POLR3K/RPC10, POLR2E/RPABC1, POLR2F/RPABC2, POLR2H/RPABC3, POLR2K/RPABC4 and POLR2L/RPABC5; a mobile stalk composed of two subunits POLR3H/RPC8 and CRCP/RPC9, protruding from the core and functioning primarily in transcription initiation; and additional subunits homologous to general transcription factors of the RNA polymerase II machinery, POLR3C/RPC3-POLR3F/RPC6-POLR3G/RPC7 heterotrimer required for transcription initiation and POLR3D/RPC4-POLR3E/RPC5 heterodimer involved in both transcription initiation and termination.

It localises to the nucleus. Core component of RNA polymerase III (Pol III) which synthesizes small non-coding RNAs using the four ribonucleoside triphosphates as substrates. Can mediate Pol I proofreading of the nascent RNA transcript. Anchors into the Pol III active site to constantly monitor transcription fidelity, cleaves mis-incorporated 5'-ribonucleotides and restarts the transcription process. Once Pol III reaches the poly(dT) termination signal, can induce Pol III clamp opening and transcription termination. Pol III plays an important role in sensing and limiting infection by intracellular bacteria and DNA viruses. Acts as a nuclear and cytosolic DNA sensor involved in innate immune response. Can sense non-self dsDNA that serves as template for transcription into dsRNA. The non-self RNA polymerase III transcripts, such as Epstein-Barr virus-encoded RNAs (EBERs) induce type I interferon and NF-kappa-B through the RIG-I pathway. The sequence is that of DNA-directed RNA polymerase III subunit RPC10 from Homo sapiens (Human).